The chain runs to 464 residues: MRCSPKRSLTAVIAASFLLLLLLLLLHRGSWQDPQEVQFRDLPSDAVLKILKQGSLHILQDTDNLCALHNISYHLLAGSPLPHKKFLAVGLSSVRRPRGYYLPDTLQSLFKQSSEEELQEMVVVVHLADADPIWNAQVAADISHRFAHHILLGRLVLIHTPHEFYPTLEGLKRNYNDPEERVKFRSKQNVDYAFLFTFAANLSSYYLMIEDDVWSAKSFFTAIRKAVASQEGSNWATLEFSKLGYIGKLYRSSDLPRLARFLLLFYQEMPCDWLLTHFRLLLTQKDVIRFKPSLFQHMGLYSSFQGTVNRLEDDEFQADAMDLPDNPPAALFTNMVVFENYEPSKAYSTARGYFWGKNPAVGSIFSIVFHQPARVTRVRVQTGSSERPGDFLHAGVLELGRGRRADGRDCSVYTTVGTFEKGNLEWRGLEKGMPNPVECVRIRVTQSQSEWLIIQSIGIWTAGT.

The Cytoplasmic segment spans residues 1–10 (MRCSPKRSLT). The helical; Signal-anchor for type II membrane protein transmembrane segment at 11–31 (AVIAASFLLLLLLLLLHRGSW) threads the bilayer. The Lumenal segment spans residues 32 to 464 (QDPQEVQFRD…QSIGIWTAGT (433 aa)). 2 N-linked (GlcNAc...) asparagine glycosylation sites follow: asparagine 70 and asparagine 201.

This sequence belongs to the glycosyltransferase 54 family. A divalent metal cation serves as cofactor. Highly expressed in oviduct, spleen, lung and colon.

It localises to the golgi apparatus membrane. It carries out the reaction N(4)-{beta-D-GlcNAc-(1-&gt;2)-[beta-D-GlcNAc-(1-&gt;4)]-alpha-D-Man-(1-&gt;3)-[beta-D-GlcNAc-(1-&gt;2)-[beta-D-GlcNAc-(1-&gt;6)]-alpha-D-Man-(1-&gt;6)]-beta-D-Man-(1-&gt;4)-beta-D-GlcNAc-(1-&gt;4)-beta-D-GlcNAc}-L-asparaginyl-[protein] + UDP-N-acetyl-alpha-D-glucosamine = N(4)-{beta-D-GlcNAc-(1-&gt;2)-[beta-D-GlcNAc-(1-&gt;4)]-alpha-D-Man-(1-&gt;3)-[beta-D-GlcNAc-(1-&gt;2)-[beta-D-GlcNAc-(1-&gt;4)]-[beta-D-GlcNAc-(1-&gt;6)]-alpha-D-Man-(1-&gt;6)]-beta-D-Man-(1-&gt;4)-beta-D-GlcNAc-(1-&gt;4)-beta-D-GlcNAc}-L-asparaginyl-[protein] + UDP + H(+). It participates in protein modification; protein glycosylation. Functionally, glycosyltransferase that catalyzes the transfer of GlcNAc to the Manalpha1-6 arm to form GlcNAcBeta1-4Manalpha1-6 linkage (also named 'GnT-VI' activity). May also participate in the transfer of N-acetylglucosamine (GlcNAc) to the core mannose residues of N-linked glycans by catalyzing the formation of the GlcNAcbeta1-4 branch on the GlcNAcbeta1-2Manalpha1-3 arm of the core structure of N-linked glycans. The protein is Alpha-1,6-mannosyl-glycoprotein 4-beta-N-acetylglucosaminyltransferase (MGAT4C) of Gallus gallus (Chicken).